Reading from the N-terminus, the 98-residue chain is Co-chaperonin GroES 1 (98 aa).

The protein belongs to the GroES chaperonin family. Heptamer of 7 subunits arranged in a ring. Interacts with the chaperonin GroEL.

It localises to the cytoplasm. In terms of biological role, together with the chaperonin GroEL, plays an essential role in assisting protein folding. The GroEL-GroES system forms a nano-cage that allows encapsulation of the non-native substrate proteins and provides a physical environment optimized to promote and accelerate protein folding. GroES binds to the apical surface of the GroEL ring, thereby capping the opening of the GroEL channel. In Rhizobium meliloti (strain 1021) (Ensifer meliloti), this protein is Co-chaperonin GroES 1.